Consider the following 422-residue polypeptide: NADH-quinone oxidoreductase subunit D 1 (422 aa).

It belongs to the complex I 49 kDa subunit family. As to quaternary structure, NDH-1 is composed of 14 different subunits. Subunits NuoB, C, D, E, F, and G constitute the peripheral sector of the complex.

The protein localises to the cell membrane. It carries out the reaction a quinone + NADH + 5 H(+)(in) = a quinol + NAD(+) + 4 H(+)(out). Functionally, NDH-1 shuttles electrons from NADH, via FMN and iron-sulfur (Fe-S) centers, to quinones in the respiratory chain. The immediate electron acceptor for the enzyme in this species is believed to be ubiquinone. Couples the redox reaction to proton translocation (for every two electrons transferred, four hydrogen ions are translocated across the cytoplasmic membrane), and thus conserves the redox energy in a proton gradient. This Herpetosiphon aurantiacus (strain ATCC 23779 / DSM 785 / 114-95) protein is NADH-quinone oxidoreductase subunit D 1.